A 792-amino-acid polypeptide reads, in one-letter code: uncharacterized protein (792 aa).

Tandem repeats lie at residues 91–102 (NSSTNATTTASI), 103–114 (NVRTSATTTASI), 115–126 (NVRTSATTTEST), 127–138 (NSNTNATTTEST), 139–150 (NSSTNATTTASI), 151–162 (NVRTSATTTEST), 163–174 (NSSTNATTTASI), 175–186 (NVRTSATTTEST), 187–198 (NSSTNATTTASI), 199–210 (NVRTSATTTEST), 211–222 (NSNTNASTNATT), 223–234 (NSSTNATTTAST), 235–246 (NVRTSATTNATT), 247–258 (NSSTNATTTAST), 259–270 (NVRTSATTTAST), 271–282 (NVRTSATTTASI), 283–294 (NVRTSATTTESI), 295–306 (NSSTNATTTEST), 307–318 (NSNTSATTTEST), 319–330 (DSNTNATTTASI), 331–342 (NVRTSATTTEST), 343–354 (NSNTSATTTEST), 355–366 (DSNTSATTTAST), 367–378 (NSSTNATTTAST), and 379–390 (NSSTNATTTEST). A 25 X 12 AA tandem repeat of N-[SV]-[RS]-T-[NS]-A-T-T-T-[AE]-[ST]-[IT] region spans residues 91-390 (NSSTNATTTA…STNATTTEST (300 aa)). Residues 113 to 417 (SINVRTSATT…RFHPVTDINK (305 aa)) are disordered. The span at 118–393 (TSATTTESTN…ATTTESTNAS (276 aa)) shows a compositional bias: low complexity. Residues 394 to 417 (AKEDANKDGNAEDNRFHPVTDINK) are compositionally biased toward basic and acidic residues.

This is an uncharacterized protein from Saccharomyces cerevisiae (strain ATCC 204508 / S288c) (Baker's yeast).